The sequence spans 218 residues: uncharacterized protein (218 aa).

2 helical membrane-spanning segments follow: residues 14–34 (CLLSIITILLYWYLRFVYFTS) and 175–195 (LIIPIPFGTIKIIVGSPLALV).

This sequence to H.pylori HP0270.

The protein resides in the cell membrane. This is an uncharacterized protein from Rickettsia prowazekii (strain Madrid E).